The sequence spans 238 residues: Nodulation protein S (238 aa).

This sequence belongs to the NodS family.

In terms of biological role, SAM-utilizing methyltransferase involved in nod factor synthesis. The protein is Nodulation protein S (nodS) of Rhizobium tropici.